The following is an 80-amino-acid chain: UPF0270 protein VFMJ11_0205 (80 aa).

This sequence belongs to the UPF0270 family.

This Aliivibrio fischeri (strain MJ11) (Vibrio fischeri) protein is UPF0270 protein VFMJ11_0205.